The sequence spans 420 residues: tRNA(Ile)-lysidine synthase (420 aa).

28–33 (SGGLDS) provides a ligand contact to ATP.

Belongs to the tRNA(Ile)-lysidine synthase family.

It localises to the cytoplasm. The enzyme catalyses cytidine(34) in tRNA(Ile2) + L-lysine + ATP = lysidine(34) in tRNA(Ile2) + AMP + diphosphate + H(+). Ligates lysine onto the cytidine present at position 34 of the AUA codon-specific tRNA(Ile) that contains the anticodon CAU, in an ATP-dependent manner. Cytidine is converted to lysidine, thus changing the amino acid specificity of the tRNA from methionine to isoleucine. The chain is tRNA(Ile)-lysidine synthase from Hydrogenovibrio crunogenus (strain DSM 25203 / XCL-2) (Thiomicrospira crunogena).